A 318-amino-acid chain; its full sequence is 2-keto-3-deoxygluconate permease (318 aa).

10 consecutive transmembrane segments (helical) span residues 10 to 30, 42 to 62, 76 to 96, 105 to 125, 139 to 159, 162 to 182, 199 to 219, 224 to 244, 254 to 274, and 289 to 309; these read IPGGLMLVPLFLGAFCNTFTP, GLITGTIPILAVWFFCMGASI, VLVVTKLATAWVVAMIAGAFL, LLAGISVLALVAAMDMTNGGL, AGAFVLMSLESGPLMTMVILG, GIATFEPQLFVGAVLPFLIGF, VQTLIPFFAFALGNTINLSVI, FAGIFLGVLVIIVTGIPLILA, TAGIAASSSAGAAVATPLLIA, and ALVATSVIVTSVLVPIITALW.

The protein belongs to the KdgT transporter family.

The protein resides in the cell inner membrane. The catalysed reaction is 2-dehydro-3-deoxy-D-gluconate(in) + H(+)(in) = 2-dehydro-3-deoxy-D-gluconate(out) + H(+)(out). Its function is as follows. Catalyzes the proton-dependent uptake of 2-keto-3-deoxygluconate (KDG) into the cell. This chain is 2-keto-3-deoxygluconate permease, found in Pectobacterium atrosepticum (strain SCRI 1043 / ATCC BAA-672) (Erwinia carotovora subsp. atroseptica).